The primary structure comprises 550 residues: Transcription factor 7-like 1-D (550 aa).

The tract at residues 1–61 is interaction with CTNNB1-A; sequence MPQLNSGXGD…SENHSSDSDS (61 aa). Disordered stretches follow at residues 1 to 77, 182 to 212, 390 to 473, and 488 to 514; these read MPQL…EKPR, GTPP…PYYP, WSAR…SLTT, and ASKS…SRPI. Basic and acidic residues-rich tracts occupy residues 17–32 and 52–77; these read ELIR…EKSP and SENH…EKPR. Residues 109-311 form an interaction with AES and TLE4-A region; the sequence is LGGITCPMVP…SPNLSMKSNV (203 aa). A DNA-binding region (HMG box) is located at residues 323 to 391; it reads IKKPLNAFML…LHSQLYPSWS (69 aa). Residues 406–415 show a composition bias toward basic and acidic residues; the sequence is KQSPEMENYT. Residues 407–550 are interaction with CTBP-B; sequence QSPEMENYTK…PLPLVARSSD (144 aa). The segment covering 444–455 has biased composition (low complexity); sequence SPATPSAALASP.

Belongs to the TCF/LEF family. In terms of assembly, interacts with csnk1e, ctnnb1-A, ctbp-B, dact1-A and gsk3b. May interact with ase and tle4-A. Phosphorylated. Phosphorylation by csnk1e promotes binding to ctnnb1-A while phosphorylation by gsk3b may reverse this effect.

It localises to the nucleus. Functionally, participates in the Wnt signaling pathway. Binds to DNA and acts as a repressor in the absence of ctnnb1-A and possibly ctnnb1-B, and as an activator in the presence of these proteins. Required early in development for the establishment of the dorsal body axis in response to maternal Wnt signaling. In Xenopus laevis (African clawed frog), this protein is Transcription factor 7-like 1-D (tcf7l1-d).